We begin with the raw amino-acid sequence, 721 residues long: Phosphomethylpyrimidine synthase (721 aa).

Residues asparagine 256, methionine 285, tyrosine 314, histidine 350, 370 to 372 (SRG), 411 to 414 (DGMR), and glutamate 450 each bind substrate. Histidine 454 provides a ligand contact to Zn(2+). Tyrosine 477 lines the substrate pocket. Histidine 518 lines the Zn(2+) pocket. [4Fe-4S] cluster-binding residues include cysteine 598, cysteine 601, and cysteine 606.

This sequence belongs to the ThiC family. As to quaternary structure, homodimer. Requires [4Fe-4S] cluster as cofactor.

It carries out the reaction 5-amino-1-(5-phospho-beta-D-ribosyl)imidazole + S-adenosyl-L-methionine = 4-amino-2-methyl-5-(phosphooxymethyl)pyrimidine + CO + 5'-deoxyadenosine + formate + L-methionine + 3 H(+). The protein operates within cofactor biosynthesis; thiamine diphosphate biosynthesis. In terms of biological role, catalyzes the synthesis of the hydroxymethylpyrimidine phosphate (HMP-P) moiety of thiamine from aminoimidazole ribotide (AIR) in a radical S-adenosyl-L-methionine (SAM)-dependent reaction. The chain is Phosphomethylpyrimidine synthase from Shewanella oneidensis (strain ATCC 700550 / JCM 31522 / CIP 106686 / LMG 19005 / NCIMB 14063 / MR-1).